The following is a 185-amino-acid chain: Ribosome-recycling factor (185 aa).

Belongs to the RRF family.

It localises to the cytoplasm. In terms of biological role, responsible for the release of ribosomes from messenger RNA at the termination of protein biosynthesis. May increase the efficiency of translation by recycling ribosomes from one round of translation to another. In Geobacillus kaustophilus (strain HTA426), this protein is Ribosome-recycling factor.